The following is a 392-amino-acid chain: MIIKPKIRGFICTNSHPVGCAENVKRQIEFVRNKPAITNGPKNVLVIGCSTGYGLASRITAAFGSEAHTLGVCFEKEPTEKKTATAGWYNTAAFHQEANKAGLAFHSINGDAFSDEIKQESIDYIKQNMGKIDLVVYSLASPKRKDPDSGEVYSSVLKPIGKQYTTKTYNTDKDQVHEVTLDPATDEDIANTVKVMGGEDWERWVKALHNAGVLAENCQTTAYTYIGKKLTLPIYGHATIGRAKEDLDRAASELVAECDDLNLKAYVSSLKALVTQASSAIPVMPLYISLIYKVMKEEGTHEGCIEQIYRLFTEGLYNSNPELDEAGRLHMDGYETNDKTQAKIEALWEQVTQDNFHQLADYEGYHQEFLHLFGFGFDNVDYDADIDPKVNW.

Residues 48-53, 74-75, 111-112, and 139-140 each bind NAD(+); these read GCSTGY, FE, DA, and LA. Tyrosine 225 is a binding site for substrate. Tyrosine 235 serves as the catalytic Proton donor. NAD(+) is bound by residues lysine 244 and 273-275; that span reads LVT.

It belongs to the TER reductase family. Monomer.

The enzyme catalyses a 2,3-saturated acyl-[ACP] + NAD(+) = a (2E)-enoyl-[ACP] + NADH + H(+). It functions in the pathway lipid metabolism; fatty acid biosynthesis. Its function is as follows. Involved in the final reduction of the elongation cycle of fatty acid synthesis (FAS II). Catalyzes the reduction of a carbon-carbon double bond in an enoyl moiety that is covalently linked to an acyl carrier protein (ACP). This is Enoyl-[acyl-carrier-protein] reductase [NADH] from Idiomarina loihiensis (strain ATCC BAA-735 / DSM 15497 / L2-TR).